We begin with the raw amino-acid sequence, 338 residues long: Microtubule-associated protein RP/EB family member 2 (338 aa).

The disordered stretch occupies residues 1-21; it reads MPGPTQALSPNGENNNDIIQD. One can recognise a Calponin-homology (CH) domain in the interval 57-159; sequence TMSRHDIIAW…FIQWFKKFFD (103 aa). Disordered regions lie at residues 171–241 and 300–338; these read EARQ…KDLE and SEEH…FHFV. The span at 200-234 shows a compositional bias: low complexity; the sequence is SPTAGAAKSSPASKPGSTPSRPSSAKKAAPSSSAS. Positions 236-306 constitute an EB1 C-terminal domain; the sequence is SDKDLETQVI…LYASEEHESH (71 aa). A compositionally biased stretch (basic and acidic residues) spans 300–327; that stretch reads SEEHESHTEEHEGEEQVHEQPSSRRSTD. Residues 328 to 338 are compositionally biased toward low complexity; the sequence is SRSVSDNFHFV.

This sequence belongs to the MAPRE family.

It is found in the cytoplasm. The protein resides in the cytoskeleton. Its function is as follows. May be involved in microtubule polymerization, and spindle function by stabilizing microtubules and anchoring them at centrosomes. The protein is Microtubule-associated protein RP/EB family member 2 (MAPRE2) of Gallus gallus (Chicken).